Reading from the N-terminus, the 1024-residue chain is Beta-galactosidase (1024 aa).

Substrate is bound by residues N103 and D202. D202 serves as a coordination point for Na(+). Mg(2+) is bound by residues E417, H419, and E462. Residues E462 and 538–541 (EYAH) each bind substrate. E462 acts as the Proton donor in catalysis. E538 (nucleophile) is an active-site residue. N598 is a binding site for Mg(2+). The Na(+) site is built by F602 and N605. Substrate-binding residues include N605 and W1000.

This sequence belongs to the glycosyl hydrolase 2 family. Homotetramer. Mg(2+) is required as a cofactor. The cofactor is Na(+).

It catalyses the reaction Hydrolysis of terminal non-reducing beta-D-galactose residues in beta-D-galactosides.. The protein is Beta-galactosidase of Escherichia coli O6:K15:H31 (strain 536 / UPEC).